Reading from the N-terminus, the 156-residue chain is ATP synthase subunit b (156 aa).

Residues 7 to 27 (LIGQLIAFAIFVAFCMKFVWP) form a helical membrane-spanning segment.

This sequence belongs to the ATPase B chain family. As to quaternary structure, F-type ATPases have 2 components, F(1) - the catalytic core - and F(0) - the membrane proton channel. F(1) has five subunits: alpha(3), beta(3), gamma(1), delta(1), epsilon(1). F(0) has three main subunits: a(1), b(2) and c(10-14). The alpha and beta chains form an alternating ring which encloses part of the gamma chain. F(1) is attached to F(0) by a central stalk formed by the gamma and epsilon chains, while a peripheral stalk is formed by the delta and b chains.

It is found in the cell inner membrane. In terms of biological role, f(1)F(0) ATP synthase produces ATP from ADP in the presence of a proton or sodium gradient. F-type ATPases consist of two structural domains, F(1) containing the extramembraneous catalytic core and F(0) containing the membrane proton channel, linked together by a central stalk and a peripheral stalk. During catalysis, ATP synthesis in the catalytic domain of F(1) is coupled via a rotary mechanism of the central stalk subunits to proton translocation. Functionally, component of the F(0) channel, it forms part of the peripheral stalk, linking F(1) to F(0). This is ATP synthase subunit b from Pasteurella multocida (strain Pm70).